Consider the following 445-residue polypeptide: FAS-associated factor 2 (445 aa).

A2 is modified (N-acetylalanine). The region spanning E12 to Q48 is the UBA domain. K167 carries the N6-acetyllysine modification. Positions S275 to L350 form a coiled coil. Positions S300 to S361 are disordered. Residues A303–E348 are compositionally biased toward basic and acidic residues. Positions D357 to V439 constitute a UBX domain.

As to quaternary structure, identified in a complex that contains SEL1L, OS9, FAF2/UBXD8, UBE2J1/UBC6E and AUP1. Interacts with YOD1. Interacts (via N-terminus) with UBQLN2 (via C-terminus). Interacts with PNPLA2. Interacts with ZFAND2B; probably through VCP. Interacts with LMBR1L and UBAC2.

Its subcellular location is the cytoplasm. It is found in the lipid droplet. It localises to the endoplasmic reticulum. Functionally, plays an important role in endoplasmic reticulum-associated degradation (ERAD) that mediates ubiquitin-dependent degradation of misfolded endoplasmic reticulum proteins. By controlling the steady-state expression of the IGF1R receptor, indirectly regulates the insulin-like growth factor receptor signaling pathway. Involved in inhibition of lipid droplet degradation by binding to phospholipase PNPL2 and inhibiting its activity by promoting dissociation of PNPL2 from its endogenous activator, ABHD5 which inhibits the rate of triacylglycerol hydrolysis. Involved in stress granule disassembly: associates with ubiquitinated G3BP1 in response to heat shock, thereby promoting interaction between ubiquitinated G3BP1 and VCP, followed by G3BP1 extraction from stress granules and stress granule disassembly. This is FAS-associated factor 2 (Faf2) from Mus musculus (Mouse).